The primary structure comprises 68 residues: Antimicrobial peptide Eval655 (68 aa).

An N-terminal signal peptide occupies residues 1–23 (MKTQFVVLLVALVLLQMFAQSEA). Residue Leu-36 is modified to Leucine amide. A propeptide spanning residues 37–68 (GKRGLKNLDDFDDIFDDDLSSADLEFLKQLMR) is cleaved from the precursor.

This sequence belongs to the non-disulfide-bridged peptide (NDBP) superfamily. Short antimicrobial peptide (group 4) family. Expressed by the venom gland.

The protein resides in the secreted. Functionally, probable antimicrobial peptide. Shows low inhibitory activity against herpes simplex virus type 1 (HSV-1). In Euscorpiops validus (Scorpion), this protein is Antimicrobial peptide Eval655.